A 161-amino-acid chain; its full sequence is Endoribonuclease YbeY (161 aa).

Zn(2+) is bound by residues H120, H124, and D130.

The protein belongs to the endoribonuclease YbeY family. The cofactor is Zn(2+).

It is found in the cytoplasm. Functionally, single strand-specific metallo-endoribonuclease involved in late-stage 70S ribosome quality control and in maturation of the 3' terminus of the 16S rRNA. This is Endoribonuclease YbeY from Chlamydia trachomatis serovar A (strain ATCC VR-571B / DSM 19440 / HAR-13).